We begin with the raw amino-acid sequence, 283 residues long: S-methyl-5'-thioadenosine phosphorylase (283 aa).

Threonine 18 serves as a coordination point for phosphate. N6-acetyllysine is present on lysine 51. Residues 60–61 and 93–94 each bind phosphate; these read RH and TA. Methionine 196 lines the substrate pocket. Position 197 (threonine 197) interacts with phosphate. Residue 220-222 participates in substrate binding; the sequence is DYD.

Belongs to the PNP/MTAP phosphorylase family. MTAP subfamily. In terms of assembly, homotrimer.

The protein resides in the cytoplasm. Its subcellular location is the nucleus. The catalysed reaction is S-methyl-5'-thioadenosine + phosphate = 5-(methylsulfanyl)-alpha-D-ribose 1-phosphate + adenine. The protein operates within amino-acid biosynthesis; L-methionine biosynthesis via salvage pathway; S-methyl-5-thio-alpha-D-ribose 1-phosphate from S-methyl-5'-thioadenosine (phosphorylase route): step 1/1. Functionally, catalyzes the reversible phosphorylation of S-methyl-5'-thioadenosine (MTA) to adenine and 5-methylthioribose-1-phosphate. Involved in the breakdown of MTA, a major by-product of polyamine biosynthesis. Responsible for the first step in the methionine salvage pathway after MTA has been generated from S-adenosylmethionine. Has broad substrate specificity with 6-aminopurine nucleosides as preferred substrates. In Mus musculus (Mouse), this protein is S-methyl-5'-thioadenosine phosphorylase (Mtap).